The chain runs to 75 residues: Acylphosphatase-like protein MJ1405 (75 aa).

The Acylphosphatase-like domain occupies 8–75; sequence TYEIIIYGRI…TNFWRVRKCK (68 aa).

In Methanocaldococcus jannaschii (strain ATCC 43067 / DSM 2661 / JAL-1 / JCM 10045 / NBRC 100440) (Methanococcus jannaschii), this protein is Acylphosphatase-like protein MJ1405.